Consider the following 77-residue polypeptide: DNA-directed RNA polymerase subunit omega (77 aa).

The protein belongs to the RNA polymerase subunit omega family. The RNAP catalytic core consists of 2 alpha, 1 beta, 1 beta' and 1 omega subunit. When a sigma factor is associated with the core the holoenzyme is formed, which can initiate transcription.

The catalysed reaction is RNA(n) + a ribonucleoside 5'-triphosphate = RNA(n+1) + diphosphate. Functionally, promotes RNA polymerase assembly. Latches the N- and C-terminal regions of the beta' subunit thereby facilitating its interaction with the beta and alpha subunits. The chain is DNA-directed RNA polymerase subunit omega from Nitratidesulfovibrio vulgaris (strain ATCC 29579 / DSM 644 / CCUG 34227 / NCIMB 8303 / VKM B-1760 / Hildenborough) (Desulfovibrio vulgaris).